The chain runs to 360 residues: Phenylalanine--tRNA ligase alpha subunit (360 aa).

E264 provides a ligand contact to Mg(2+).

This sequence belongs to the class-II aminoacyl-tRNA synthetase family. Phe-tRNA synthetase alpha subunit type 1 subfamily. In terms of assembly, tetramer of two alpha and two beta subunits. The cofactor is Mg(2+).

The protein localises to the cytoplasm. It catalyses the reaction tRNA(Phe) + L-phenylalanine + ATP = L-phenylalanyl-tRNA(Phe) + AMP + diphosphate + H(+). This chain is Phenylalanine--tRNA ligase alpha subunit, found in Streptomyces avermitilis (strain ATCC 31267 / DSM 46492 / JCM 5070 / NBRC 14893 / NCIMB 12804 / NRRL 8165 / MA-4680).